Here is a 466-residue protein sequence, read N- to C-terminus: ATP-dependent protease ATPase subunit HslU (466 aa).

ATP is bound by residues Ile18, 60–65, Asp279, Glu344, and Arg416; that span reads GVGKTE.

The protein belongs to the ClpX chaperone family. HslU subfamily. As to quaternary structure, a double ring-shaped homohexamer of HslV is capped on each side by a ring-shaped HslU homohexamer. The assembly of the HslU/HslV complex is dependent on binding of ATP.

It localises to the cytoplasm. ATPase subunit of a proteasome-like degradation complex; this subunit has chaperone activity. The binding of ATP and its subsequent hydrolysis by HslU are essential for unfolding of protein substrates subsequently hydrolyzed by HslV. HslU recognizes the N-terminal part of its protein substrates and unfolds these before they are guided to HslV for hydrolysis. The polypeptide is ATP-dependent protease ATPase subunit HslU (Lactobacillus acidophilus (strain ATCC 700396 / NCK56 / N2 / NCFM)).